The primary structure comprises 871 residues: Ubiquitin carboxyl-terminal hydrolase 8 (871 aa).

The region spanning 4–99 (TSPDESPDST…GETGEASVSG (96 aa)) is the DUSP domain. A USP domain is found at 279–869 (TGLQNLGNTC…AAYVLFYKRL (591 aa)). The active-site Nucleophile is the Cys288. Positions 615 to 650 (ENLENPTEEEATDKTDTDGTTSVEDTNSTDVKETTE) are disordered. The active-site Proton acceptor is His828.

This sequence belongs to the peptidase C19 family.

It catalyses the reaction Thiol-dependent hydrolysis of ester, thioester, amide, peptide and isopeptide bonds formed by the C-terminal Gly of ubiquitin (a 76-residue protein attached to proteins as an intracellular targeting signal).. Functionally, recognizes and hydrolyzes the peptide bond at the C-terminal Gly of ubiquitin. Involved in the processing of poly-ubiquitin precursors as well as that of ubiquitinated proteins. This Arabidopsis thaliana (Mouse-ear cress) protein is Ubiquitin carboxyl-terminal hydrolase 8 (UBP8).